The chain runs to 150 residues: Transcriptional regulator MraZ (150 aa).

SpoVT-AbrB domains follow at residues 9 to 54 (QSIH…PPEE) and 83 to 126 (AEEC…NKST).

Belongs to the MraZ family. Forms oligomers.

It localises to the cytoplasm. It is found in the nucleoid. This chain is Transcriptional regulator MraZ, found in Syntrophobacter fumaroxidans (strain DSM 10017 / MPOB).